Reading from the N-terminus, the 761-residue chain is Hyperosmolality-gated Ca2+ permeable channel 1.6 (761 aa).

The next 10 helical transmembrane spans lie at 7-27 (IGVA…AFAI), 101-121 (IYLL…TTMV), 156-176 (PRFW…CFIL), 375-395 (LIVG…IAFV), 419-439 (LLKS…FLLF), 467-487 (FYMF…TAFQ), 512-532 (ATFF…GEIL), 583-603 (AAVS…AFVV), 630-650 (VVTA…TKHA), and 653-673 (STPL…HCKN). Basic and acidic residues predominate over residues 718–731 (RVGEDPEPEEKLES). The disordered stretch occupies residues 718-761 (RVGEDPEPEEKLESDMSPPDLVATKRWSWRNTPLPSKDSCREIP).

The protein belongs to the CSC1 (TC 1.A.17) family.

It is found in the membrane. Acts as an osmosensitive calcium-permeable cation channel. The polypeptide is Hyperosmolality-gated Ca2+ permeable channel 1.6 (Arabidopsis thaliana (Mouse-ear cress)).